Consider the following 64-residue polypeptide: Large ribosomal subunit protein eL37 (64 aa).

Residues C20, C23, C35, and C38 each contribute to the Zn(2+) site. The segment at 20-38 (CRRCGRRAFHVRKKVCAAC) adopts a C4-type zinc-finger fold.

It belongs to the eukaryotic ribosomal protein eL37 family. Zn(2+) is required as a cofactor.

Functionally, binds to the 23S rRNA. The protein is Large ribosomal subunit protein eL37 of Methanococcus maripaludis (strain DSM 14266 / JCM 13030 / NBRC 101832 / S2 / LL).